Consider the following 364-residue polypeptide: Long-wave-sensitive opsin 1 (364 aa).

A disordered region spans residues 1 to 23 (MAQQWSLQRLAGRHPQDSYEDST). Residues 1-52 (MAQQWSLQRLAGRHPQDSYEDSTQSSIFTYTNSNSTRGPFEGPNYHIAPRWV) are Extracellular-facing. Serine 22 carries O-linked (GlcNAc) serine glycosylation. Asparagine 34 carries N-linked (GlcNAc...) asparagine glycosylation. The chain crosses the membrane as a helical span at residues 53-77 (YHLTSVWMIFVVTASVFTNGLVLAA). The Cytoplasmic segment spans residues 78–89 (TMKFKKLRHPLN). The chain crosses the membrane as a helical span at residues 90–115 (WILVNLAVADLAETVIASTISIVNQV). The Extracellular portion of the chain corresponds to 116 to 129 (SGYFVLGHPMCVLE). Residues cysteine 126 and cysteine 203 are joined by a disulfide bond. The helical transmembrane segment at 130-149 (GYTVSLCGITGLWSLAIISW) threads the bilayer. Topologically, residues 150–168 (ERWMVVCKPFGNVRFDAKL) are cytoplasmic. Residues 169–192 (AIVGIAFSWIWAAVWTAPPIFGWS) traverse the membrane as a helical segment. Over 193 to 218 (RYWPHGLKTSCGPDVFSGSSYPGVQS) the chain is Extracellular. The chain crosses the membrane as a helical span at residues 219–246 (YMIVLMVTCCIIPLAIIMLCYLQVWLAI). At 247–268 (RAVAKQQKESESTQKAEKEVTR) the chain is on the cytoplasmic side. Residues 269 to 292 (MVVVMIFAYCVCWGPYTFFACFAA) traverse the membrane as a helical segment. Residues 293–300 (ANPGYAFH) lie on the Extracellular side of the membrane. The helical transmembrane segment at 301 to 325 (PLMAALPAYFAKSATIYNPVIYVFM) threads the bilayer. The residue at position 312 (lysine 312) is an N6-(retinylidene)lysine. Topologically, residues 326–364 (NRQFRNCILQLFGKKVDDGSELSSASKTEVSSVSSVSPA) are cytoplasmic.

Belongs to the G-protein coupled receptor 1 family. Opsin subfamily. Phosphorylated on some or all of the serine and threonine residues present in the C-terminal region. As to expression, the three color pigments are found in the cone photoreceptor cells.

Its subcellular location is the membrane. Its function is as follows. Visual pigments are the light-absorbing molecules that mediate vision. They consist of an apoprotein, opsin, covalently linked to cis-retinal. The polypeptide is Long-wave-sensitive opsin 1 (OPN1LW) (Homo sapiens (Human)).